The chain runs to 543 residues: CTP synthase (543 aa).

Residues 1 to 265 (MTRYIFVTGG…DDFVVERFGL (265 aa)) are amidoligase domain. S13 is a CTP binding site. S13 contacts UTP. ATP contacts are provided by residues 14–19 (SLGKGI) and D71. Residues D71 and E139 each contribute to the Mg(2+) site. CTP-binding positions include 146-148 (DIE), 186-191 (KTKPTQ), and K222. Residues 186-191 (KTKPTQ) and K222 each bind UTP. In terms of domain architecture, Glutamine amidotransferase type-1 spans 290 to 541 (TIAMVGKYME…VNAALAQKAK (252 aa)). L-glutamine is bound at residue G351. The Nucleophile; for glutamine hydrolysis role is filled by C378. L-glutamine-binding positions include 379 to 382 (LGMQ), E402, and R469. Residues H514 and E516 contribute to the active site.

This sequence belongs to the CTP synthase family. As to quaternary structure, homotetramer.

The catalysed reaction is UTP + L-glutamine + ATP + H2O = CTP + L-glutamate + ADP + phosphate + 2 H(+). The enzyme catalyses L-glutamine + H2O = L-glutamate + NH4(+). It carries out the reaction UTP + NH4(+) + ATP = CTP + ADP + phosphate + 2 H(+). Its pathway is pyrimidine metabolism; CTP biosynthesis via de novo pathway; CTP from UDP: step 2/2. Allosterically activated by GTP, when glutamine is the substrate; GTP has no effect on the reaction when ammonia is the substrate. The allosteric effector GTP functions by stabilizing the protein conformation that binds the tetrahedral intermediate(s) formed during glutamine hydrolysis. Inhibited by the product CTP, via allosteric rather than competitive inhibition. In terms of biological role, catalyzes the ATP-dependent amination of UTP to CTP with either L-glutamine or ammonia as the source of nitrogen. Regulates intracellular CTP levels through interactions with the four ribonucleotide triphosphates. This Ectopseudomonas mendocina (strain ymp) (Pseudomonas mendocina) protein is CTP synthase.